The following is a 487-amino-acid chain: Protein nucleotidyltransferase YdiU (487 aa).

ATP is bound by residues glycine 90, glycine 92, arginine 93, lysine 113, aspartate 125, glycine 126, arginine 176, and arginine 183. The active-site Proton acceptor is aspartate 252. Mg(2+)-binding residues include asparagine 253 and aspartate 262. ATP is bound at residue aspartate 262.

It belongs to the SELO family. Requires Mg(2+) as cofactor. Mn(2+) serves as cofactor.

The enzyme catalyses L-seryl-[protein] + ATP = 3-O-(5'-adenylyl)-L-seryl-[protein] + diphosphate. It carries out the reaction L-threonyl-[protein] + ATP = 3-O-(5'-adenylyl)-L-threonyl-[protein] + diphosphate. The catalysed reaction is L-tyrosyl-[protein] + ATP = O-(5'-adenylyl)-L-tyrosyl-[protein] + diphosphate. It catalyses the reaction L-histidyl-[protein] + UTP = N(tele)-(5'-uridylyl)-L-histidyl-[protein] + diphosphate. The enzyme catalyses L-seryl-[protein] + UTP = O-(5'-uridylyl)-L-seryl-[protein] + diphosphate. It carries out the reaction L-tyrosyl-[protein] + UTP = O-(5'-uridylyl)-L-tyrosyl-[protein] + diphosphate. Functionally, nucleotidyltransferase involved in the post-translational modification of proteins. It can catalyze the addition of adenosine monophosphate (AMP) or uridine monophosphate (UMP) to a protein, resulting in modifications known as AMPylation and UMPylation. The polypeptide is Protein nucleotidyltransferase YdiU (Azotobacter vinelandii (strain DJ / ATCC BAA-1303)).